We begin with the raw amino-acid sequence, 245 residues long: MLERGAESAAGATDPSPTGKEPVTKEAPHQGPPQKPSQSAPGPTASAGSPPRPRRRPPPQRPHRCPDCDKAFSYPSKLATHRLAHGGARPHPCPDCPKAFSYPSKLAAHRLTHSGARPHPCPHCPKSFGHRSKLAAHLWTHAPTRPYPCPDCPKSFCYPSKLAAHRHTHHATDARPYPCPHCPKAFSFPSKLAAHRLCHDPPTAPGSQATAWHRCSSCGQAFGQRRLLLLHQRSHHQVEHKGERD.

The segment at 1–67 (MLERGAESAA…PPQRPHRCPD (67 aa)) is disordered. Over residues 36-49 (PSQSAPGPTASAGS) the composition is skewed to low complexity. Residues 52-63 (RPRRRPPPQRPH) show a composition bias toward basic residues. 6 C2H2-type zinc fingers span residues 63 to 85 (HRCP…RLAH), 91 to 113 (HPCP…RLTH), 119 to 141 (HPCP…LWTH), 147 to 169 (YPCP…RHTH), 177 to 199 (YPCP…RLCH), and 213 to 240 (HRCS…QVEH).

This sequence belongs to the krueppel C2H2-type zinc-finger protein family.

Its subcellular location is the nucleus. In terms of biological role, may be involved in transcriptional regulation. The polypeptide is Zinc finger protein 575 (ZNF575) (Homo sapiens (Human)).